Consider the following 164-residue polypeptide: Protein CURVATURE THYLAKOID 1A, chloroplastic (164 aa).

Residues 1–62 (MAISVAASSS…LQKVELLKTR (62 aa)) constitute a chloroplast transit peptide. The residue at position 63 (alanine 63) is an N-acetylalanine. The Stromal segment spans residues 63 to 93 (ASSEETSSIDTNELITDLKEKWDGLENKSTV). Residues 94–114 (LIYGGGAIVAVWLSSIVVGAI) traverse the membrane as a helical segment. At 115–116 (NS) the chain is on the lumenal side. A helical transmembrane segment spans residues 117–137 (VPLLPKVMELVGLGYTGWFVY). Over 138 to 164 (RYLLFKSSRKELAEDIESLKKKIAGSE) the chain is Stromal. Residues 140 to 164 (LLFKSSRKELAEDIESLKKKIAGSE) adopt a coiled-coil conformation.

The protein belongs to the CURT family. As to quaternary structure, homo- and heterodimers and trimers.

The protein localises to the plastid. The protein resides in the chloroplast. It localises to the plastoglobule. Its subcellular location is the membrane. It is found in the chloroplast thylakoid membrane. Determines thylakoid architecture by inducing membrane curvature. The sequence is that of Protein CURVATURE THYLAKOID 1A, chloroplastic (CURT1A) from Arabidopsis thaliana (Mouse-ear cress).